We begin with the raw amino-acid sequence, 223 residues long: Small ribosomal subunit protein uS3 (223 aa).

The KH type-2 domain maps to 39 to 115 (IRKYIEKNLA…RVFINIVEIK (77 aa)).

The protein belongs to the universal ribosomal protein uS3 family. Part of the 30S ribosomal subunit. Forms a tight complex with proteins S10 and S14.

Binds the lower part of the 30S subunit head. Binds mRNA in the 70S ribosome, positioning it for translation. The polypeptide is Small ribosomal subunit protein uS3 (Leuconostoc citreum (strain KM20)).